The primary structure comprises 396 residues: Elongation factor Tu (396 aa).

The tr-type G domain occupies 10–205; sequence KTHANIGTIG…AVDDYIPTPE (196 aa). Positions 19 to 26 are G1; it reads GHVDHGKT. 19-26 contacts GTP; sequence GHVDHGKT. A Mg(2+)-binding site is contributed by T26. The interval 61-65 is G2; sequence GITIS. The interval 82-85 is G3; the sequence is DCPG. Residues 82-86 and 137-140 contribute to the GTP site; these read DCPGH and NKCD. The G4 stretch occupies residues 137–140; it reads NKCD. The tract at residues 175–177 is G5; that stretch reads SAL.

The protein belongs to the TRAFAC class translation factor GTPase superfamily. Classic translation factor GTPase family. EF-Tu/EF-1A subfamily. In terms of assembly, monomer.

Its subcellular location is the cytoplasm. It catalyses the reaction GTP + H2O = GDP + phosphate + H(+). Its function is as follows. GTP hydrolase that promotes the GTP-dependent binding of aminoacyl-tRNA to the A-site of ribosomes during protein biosynthesis. The chain is Elongation factor Tu from Halalkalibacterium halodurans (strain ATCC BAA-125 / DSM 18197 / FERM 7344 / JCM 9153 / C-125) (Bacillus halodurans).